The primary structure comprises 92 residues: Nodulation protein F (92 aa).

The region spanning 4–88 (QLTVEIIAAI…DVVEAVRGLI (85 aa)) is the Carrier domain. S45 is subject to O-(pantetheine 4'-phosphoryl)serine.

In terms of processing, 4'-phosphopantetheine is transferred from CoA to a specific serine of apo-NodF.

In terms of biological role, proposed to synthesize nod factor fatty acyl chain. Involved in trans-2,trans-4,trans-6,cis-11-octadecatetraenoic acid biosynthesis. The sequence is that of Nodulation protein F (nodF) from Rhizobium leguminosarum bv. trifolii.